The chain runs to 336 residues: Glycerol-3-phosphate dehydrogenase [NAD(P)+] (336 aa).

NADPH is bound by residues Ser11, Trp12, Arg32, Arg33, and Lys110. Sn-glycerol 3-phosphate is bound by residues Lys110 and Gly140. An NADPH-binding site is contributed by Ala144. Sn-glycerol 3-phosphate contacts are provided by Lys195, Asp248, Ser258, Arg259, and Asn260. Lys195 acts as the Proton acceptor in catalysis. An NADPH-binding site is contributed by Arg259. Val284 and Glu286 together coordinate NADPH.

This sequence belongs to the NAD-dependent glycerol-3-phosphate dehydrogenase family.

Its subcellular location is the cytoplasm. It carries out the reaction sn-glycerol 3-phosphate + NAD(+) = dihydroxyacetone phosphate + NADH + H(+). The catalysed reaction is sn-glycerol 3-phosphate + NADP(+) = dihydroxyacetone phosphate + NADPH + H(+). The protein operates within membrane lipid metabolism; glycerophospholipid metabolism. Its function is as follows. Catalyzes the reduction of the glycolytic intermediate dihydroxyacetone phosphate (DHAP) to sn-glycerol 3-phosphate (G3P), the key precursor for phospholipid synthesis. This Nocardia farcinica (strain IFM 10152) protein is Glycerol-3-phosphate dehydrogenase [NAD(P)+].